The chain runs to 335 residues: MKVSEFDYELPPELIAQEPVEPRDASRLMVLHRKTQRIEHRIFREIIEYLEPGDLLVLNVSKVIPARLYARKKTGASIEILLIERLEEGIWKCLVRPGQKVKKGTELVIDEDLSAVCLGRGEDGTRILKFQPQDDRLIFEKGRTPLPPYIKNEVPLERYQTVYAKEEGSVAAPTAGLHFTPELIEKLKKKGVQFAEVVLHVGIGTFRPVKVEEVEKHKMHEEFYQVPKETVRKLRETRERGNRIVAVGTTTVRTLETIARLPEQEEYVGKTDLFIYPPFEFKLVDALVTNFHLPRSTLLMLVAAFAGKDFVMEAYREAVKRRYRFFSFGDAMLIL.

The protein belongs to the QueA family. As to quaternary structure, monomer.

Its subcellular location is the cytoplasm. It carries out the reaction 7-aminomethyl-7-carbaguanosine(34) in tRNA + S-adenosyl-L-methionine = epoxyqueuosine(34) in tRNA + adenine + L-methionine + 2 H(+). The protein operates within tRNA modification; tRNA-queuosine biosynthesis. Functionally, transfers and isomerizes the ribose moiety from AdoMet to the 7-aminomethyl group of 7-deazaguanine (preQ1-tRNA) to give epoxyqueuosine (oQ-tRNA). The polypeptide is S-adenosylmethionine:tRNA ribosyltransferase-isomerase (queA) (Thermotoga maritima (strain ATCC 43589 / DSM 3109 / JCM 10099 / NBRC 100826 / MSB8)).